We begin with the raw amino-acid sequence, 185 residues long: MTVARLRELLPDYARDLRLNLGSVTSQSNLSAQQLWGTVLAAAIASRGRTVLVELEPEALDHLSAEAATAARTAAALMAMNNVYYRSLHLLEDEEYSRLRAGLRMNALANPGVDKVDVELWSLAVSAVNGCGRCLTAHEHELRGRGVAREVIQDAIRVASVVHAVAVTVEALETSSGTNRVAAAD.

C131 (proton donor) is an active-site residue. C131 and C134 are joined by a disulfide. The active-site Cysteine sulfenic acid (-SOH) intermediate is the C134.

The protein belongs to the AhpD family. In terms of assembly, homotrimer.

It catalyses the reaction N(6)-[(R)-dihydrolipoyl]-L-lysyl-[lipoyl-carrier protein] + a hydroperoxide = N(6)-[(R)-lipoyl]-L-lysyl-[lipoyl-carrier protein] + an alcohol + H2O. Its function is as follows. Antioxidant protein with alkyl hydroperoxidase activity. Required for the reduction of the AhpC active site cysteine residues and for the regeneration of the AhpC enzyme activity. The protein is Alkyl hydroperoxide reductase AhpD of Frankia alni (strain DSM 45986 / CECT 9034 / ACN14a).